Here is a 468-residue protein sequence, read N- to C-terminus: Probable xyloglucan galactosyltransferase GT13 (468 aa).

Topologically, residues 1–18 are cytoplasmic; the sequence is MDKFNPKKEKTVKKRALK. The helical; Signal-anchor for type II membrane protein transmembrane segment at 19 to 35 threads the bilayer; sequence VLTEISPTPLFSMLFLL. Topologically, residues 36–468 are lumenal; sequence HISQIATYLS…RVSLFKMTRI (433 aa). N-linked (GlcNAc...) asparagine glycosylation is found at asparagine 53, asparagine 116, asparagine 153, asparagine 240, and asparagine 412.

It belongs to the glycosyltransferase 47 family. In terms of tissue distribution, expressed in roots, hypocotyls, cotyledons, leaves, stems, petals and carpels.

It is found in the golgi apparatus membrane. Functions in xyloglucan synthesis by adding side chains to the xylosylated glucan backbone. Involved in the galactosylation of hemicellulose xyloglucan. This Arabidopsis thaliana (Mouse-ear cress) protein is Probable xyloglucan galactosyltransferase GT13.